Consider the following 485-residue polypeptide: Glycogen synthase (485 aa).

ADP-alpha-D-glucose is bound at residue K20.

This sequence belongs to the glycosyltransferase 1 family. Bacterial/plant glycogen synthase subfamily.

It carries out the reaction [(1-&gt;4)-alpha-D-glucosyl](n) + ADP-alpha-D-glucose = [(1-&gt;4)-alpha-D-glucosyl](n+1) + ADP + H(+). It participates in glycan biosynthesis; glycogen biosynthesis. Its function is as follows. Synthesizes alpha-1,4-glucan chains using ADP-glucose. In Vibrio parahaemolyticus serotype O3:K6 (strain RIMD 2210633), this protein is Glycogen synthase.